The chain runs to 1268 residues: Vigilin (1268 aa).

Ser-2 carries the post-translational modification N-acetylserine. Thr-8 is modified (phosphothreonine). Residues Ser-11, Ser-31, and Ser-35 each carry the phosphoserine modification. KH domains follow at residues 158-229, 230-302, 303-371, 372-442, 443-514, 515-588, 589-660, 661-734, 735-807, 808-880, 881-979, 980-1059, 1060-1134, and 1135-1209; these read PKEH…RLEV, EKAF…AVEV, KKSQ…SVAA, PSWL…EINI, DHKF…DLII, EQRF…SVPI, FKQF…EVSI, PAKL…DIRA, KPEY…SMLV, DPKH…ECAI, PQKF…EVEV, PFDL…SVTV, DPKY…DVPL, and DHRV…ALQV. Thr-295 and Thr-296 each carry phosphothreonine. Ser-317 carries the phosphoserine modification. Residue Tyr-437 is modified to Phosphotyrosine. Ser-645 carries the post-translational modification Phosphoserine. The disordered stretch occupies residues 914–944; sequence ENAVHSTEPVVQENGDEAGEGREAKDCDPGS. A compositionally biased stretch (basic and acidic residues) spans 932-944; that stretch reads GEGREAKDCDPGS. Lys-991 is subject to N6-acetyllysine. The interval 1233-1268 is disordered; that stretch reads WTASSSEKAPDMSSSEEFPSFGAQVAPKTLPWGPKR. Residues 1234–1249 are compositionally biased toward polar residues; it reads TASSSEKAPDMSSSEE. A phosphoserine mark is found at Ser-1247 and Ser-1252.

Its subcellular location is the cytoplasm. It is found in the nucleus. Appears to play a role in cell sterol metabolism. It may function to protect cells from over-accumulation of cholesterol. The polypeptide is Vigilin (HDLBP) (Homo sapiens (Human)).